The primary structure comprises 251 residues: CDP-diacylglycerol pyrophosphatase (251 aa).

A helical membrane pass occupies residues 4–24 (AGLLFLVMIVIAVVAAGIGYW).

The protein belongs to the Cdh family.

The protein localises to the cell inner membrane. It carries out the reaction a CDP-1,2-diacyl-sn-glycerol + H2O = a 1,2-diacyl-sn-glycero-3-phosphate + CMP + 2 H(+). It functions in the pathway phospholipid metabolism; CDP-diacylglycerol degradation; phosphatidate from CDP-diacylglycerol: step 1/1. The protein is CDP-diacylglycerol pyrophosphatase of Escherichia coli (strain K12 / MC4100 / BW2952).